A 263-amino-acid chain; its full sequence is S-acyl fatty acid synthase thioesterase, medium chain (263 aa).

Residue Met-1 is modified to N-acetylmethionine. Residues Ser-101 and His-237 contribute to the active site. The interval 262–263 (LT) is important for interaction with FASN.

The protein belongs to the thioesterase family. Interacts (via C-terminus) with FASN.

Its subcellular location is the cytoplasm. It localises to the cytosol. It catalyses the reaction (9Z)-octadecenoyl-[ACP] + H2O = (9Z)-octadecenoate + holo-[ACP] + H(+). It carries out the reaction decanoyl-CoA + H2O = decanoate + CoA + H(+). The catalysed reaction is dodecanoyl-CoA + H2O = dodecanoate + CoA + H(+). The enzyme catalyses tetradecanoyl-CoA + H2O = tetradecanoate + CoA + H(+). It catalyses the reaction hexadecanoyl-CoA + H2O = hexadecanoate + CoA + H(+). Contributes to the release of free fatty acids from fatty acid synthase (FASN). Has broad substrate specificity, giving rise to a range of free fatty acids with chain lengths between 10 and 16 carbon atoms (C10 - C16). This chain is S-acyl fatty acid synthase thioesterase, medium chain, found in Rattus norvegicus (Rat).